Here is a 396-residue protein sequence, read N- to C-terminus: Cell division protein FtsZ 1 (396 aa).

The interval 1–38 (MDSIVQDAIDEAEESEDSASEPADVAGGGGDTVPTGTM) is disordered. Positions 8 to 19 (AIDEAEESEDSA) are enriched in acidic residues. Residues 61-65 (GAGSN), 148-150 (GTG), Glu179, Arg183, and Asp226 contribute to the GTP site. The interval 358–396 (QIYGRNEAAEGDGPAQESTPEPEPEPQAGSEIEDIDYVE) is disordered.

This sequence belongs to the FtsZ family. In terms of assembly, homodimer. Polymerizes to form a dynamic ring structure in a strictly GTP-dependent manner. Interacts directly with several other division proteins.

It localises to the cytoplasm. Functionally, essential cell division protein that forms a contractile ring structure (Z ring) at the future cell division site. The regulation of the ring assembly controls the timing and the location of cell division. One of the functions of the FtsZ ring is to recruit other cell division proteins to the septum to produce a new cell wall between the dividing cells. Binds GTP and shows GTPase activity. The protein is Cell division protein FtsZ 1 of Halobacterium salinarum (strain ATCC 29341 / DSM 671 / R1).